The primary structure comprises 402 residues: Elongation factor Tu (402 aa).

In terms of domain architecture, tr-type G spans 10 to 212; sequence KPHINIGTIG…AVDEYIPEPK (203 aa). Residues 19 to 26 are G1; that stretch reads GHVDHGKT. 19-26 is a binding site for GTP; the sequence is GHVDHGKT. T26 provides a ligand contact to Mg(2+). The interval 60 to 64 is G2; the sequence is GITIA. The segment at 81-84 is G3; sequence DCPG. GTP-binding positions include 81-85 and 136-139; these read DCPGH and NKED. Residues 136-139 are G4; the sequence is NKED. The interval 177 to 179 is G5; sequence SAF.

This sequence belongs to the TRAFAC class translation factor GTPase superfamily. Classic translation factor GTPase family. EF-Tu/EF-1A subfamily. Monomer.

The protein localises to the cytoplasm. It carries out the reaction GTP + H2O = GDP + phosphate + H(+). Functionally, GTP hydrolase that promotes the GTP-dependent binding of aminoacyl-tRNA to the A-site of ribosomes during protein biosynthesis. This chain is Elongation factor Tu, found in Sulfurovum sp. (strain NBC37-1).